Here is a 291-residue protein sequence, read N- to C-terminus: ATP synthase gamma chain (291 aa).

This sequence belongs to the ATPase gamma chain family. In terms of assembly, F-type ATPases have 2 components, CF(1) - the catalytic core - and CF(0) - the membrane proton channel. CF(1) has five subunits: alpha(3), beta(3), gamma(1), delta(1), epsilon(1). CF(0) has three main subunits: a, b and c.

It is found in the cell membrane. Its function is as follows. Produces ATP from ADP in the presence of a proton gradient across the membrane. The gamma chain is believed to be important in regulating ATPase activity and the flow of protons through the CF(0) complex. The protein is ATP synthase gamma chain of Streptococcus uberis (strain ATCC BAA-854 / 0140J).